Reading from the N-terminus, the 260-residue chain is Trialysin (260 aa).

The N-terminal stretch at 1–19 (MSKFWLLLLLVAAFQFAHS) is a signal peptide. The propeptide at 20 to 55 (YPAAEYELDETTNDEVRQFIGDGYFEDEGDDGDEER) is removed in mature form, probably by the serine protease triapsin.

Belongs to the redulysin-like family. In terms of tissue distribution, expressed in salivary glands.

It is found in the secreted. Its subcellular location is the target cell membrane. Its function is as follows. Pore-forming protein that induces lysis of T.cruzi trypomastigotes, bacteria E.coli and human red blood cells. The parasite lysis is much more important than the hemolysis, probably due to difference in membrane composition. Its action on protozoan parasites and bacteria may indicate a role in the control of microorganism growth in the salivary glands. In Triatoma infestans (Assassin bug), this protein is Trialysin.